Consider the following 209-residue polypeptide: Small ribosomal subunit protein uS4 (209 aa).

One can recognise an S4 RNA-binding domain in the interval G99 to A164.

Belongs to the universal ribosomal protein uS4 family. As to quaternary structure, part of the 30S ribosomal subunit. Contacts protein S5. The interaction surface between S4 and S5 is involved in control of translational fidelity.

Functionally, one of the primary rRNA binding proteins, it binds directly to 16S rRNA where it nucleates assembly of the body of the 30S subunit. With S5 and S12 plays an important role in translational accuracy. The chain is Small ribosomal subunit protein uS4 from Aromatoleum aromaticum (strain DSM 19018 / LMG 30748 / EbN1) (Azoarcus sp. (strain EbN1)).